We begin with the raw amino-acid sequence, 436 residues long: tRNA (guanine(37)-N(1))-methyltransferase 1 (436 aa).

S-adenosyl-L-methionine contacts are provided by residues H229, 277–278 (DL), and N325.

Belongs to the class I-like SAM-binding methyltransferase superfamily. TRM5/TYW2 family. Monomer.

The protein localises to the mitochondrion matrix. The protein resides in the nucleus. It localises to the cytoplasm. The enzyme catalyses guanosine(37) in tRNA + S-adenosyl-L-methionine = N(1)-methylguanosine(37) in tRNA + S-adenosyl-L-homocysteine + H(+). Functionally, specifically methylates the N1 position of guanosine-37 in various cytoplasmic and mitochondrial tRNAs. Methylation is not dependent on the nature of the nucleoside 5' of the target nucleoside. This is the first step in the biosynthesis of wybutosine (yW), a modified base adjacent to the anticodon of tRNAs and required for accurate decoding. The sequence is that of tRNA (guanine(37)-N(1))-methyltransferase 1 from Phaeodactylum tricornutum (strain CCAP 1055/1).